The primary structure comprises 806 residues: Phenylalanine--tRNA ligase beta subunit (806 aa).

The tRNA-binding domain occupies 40-155; the sequence is NKGVKGVVVG…SDAEVGADAL (116 aa). Residues 409–484 enclose the B5 domain; that stretch reads VQERTVSVTA…RLYGYDHIPV (76 aa). Positions 462, 468, 471, and 472 each coordinate Mg(2+). The region spanning 712-805 is the FDX-ACB domain; it reads PRFPSMTRDM…VEEKFGAELR (94 aa).

It belongs to the phenylalanyl-tRNA synthetase beta subunit family. Type 1 subfamily. As to quaternary structure, tetramer of two alpha and two beta subunits. Mg(2+) is required as a cofactor.

Its subcellular location is the cytoplasm. It carries out the reaction tRNA(Phe) + L-phenylalanine + ATP = L-phenylalanyl-tRNA(Phe) + AMP + diphosphate + H(+). The protein is Phenylalanine--tRNA ligase beta subunit of Bacillus cereus (strain ATCC 14579 / DSM 31 / CCUG 7414 / JCM 2152 / NBRC 15305 / NCIMB 9373 / NCTC 2599 / NRRL B-3711).